The following is a 241-amino-acid chain: Sugar fermentation stimulation protein homolog (241 aa).

Belongs to the SfsA family.

The chain is Sugar fermentation stimulation protein homolog from Yersinia enterocolitica serotype O:8 / biotype 1B (strain NCTC 13174 / 8081).